The chain runs to 319 residues: Aliphatic sulfonates import ATP-binding protein SsuB (319 aa).

The ABC transporter domain maps to 63 to 282 (VTLSGVSKRF…ARASAAFAAL (220 aa)). 95-102 (GRSGCGKS) provides a ligand contact to ATP.

The protein belongs to the ABC transporter superfamily. Aliphatic sulfonates importer (TC 3.A.1.17.2) family. As to quaternary structure, the complex is composed of two ATP-binding proteins (SsuB), two transmembrane proteins (SsuC) and a solute-binding protein (SsuA).

It localises to the cell inner membrane. The enzyme catalyses ATP + H2O + aliphatic sulfonate-[sulfonate-binding protein]Side 1 = ADP + phosphate + aliphatic sulfonateSide 2 + [sulfonate-binding protein]Side 1.. Part of the ABC transporter complex SsuABC involved in aliphatic sulfonates import. Responsible for energy coupling to the transport system. This Burkholderia ambifaria (strain ATCC BAA-244 / DSM 16087 / CCUG 44356 / LMG 19182 / AMMD) (Burkholderia cepacia (strain AMMD)) protein is Aliphatic sulfonates import ATP-binding protein SsuB.